We begin with the raw amino-acid sequence, 249 residues long: Proteasome subunit alpha (249 aa).

The protein belongs to the peptidase T1A family. As to quaternary structure, the 20S proteasome core is composed of 14 alpha and 14 beta subunits that assemble into four stacked heptameric rings, resulting in a barrel-shaped structure. The two inner rings, each composed of seven catalytic beta subunits, are sandwiched by two outer rings, each composed of seven alpha subunits. The catalytic chamber with the active sites is on the inside of the barrel. Has a gated structure, the ends of the cylinder being occluded by the N-termini of the alpha-subunits. Is capped at one or both ends by the proteasome regulatory ATPase, PAN.

It localises to the cytoplasm. With respect to regulation, the formation of the proteasomal ATPase PAN-20S proteasome complex, via the docking of the C-termini of PAN into the intersubunit pockets in the alpha-rings, triggers opening of the gate for substrate entry. Interconversion between the open-gate and close-gate conformations leads to a dynamic regulation of the 20S proteasome proteolysis activity. In terms of biological role, component of the proteasome core, a large protease complex with broad specificity involved in protein degradation. This is Proteasome subunit alpha from Methanosarcina barkeri (strain Fusaro / DSM 804).